Here is a 133-residue protein sequence, read N- to C-terminus: ATP synthase epsilon chain (133 aa).

The protein belongs to the ATPase epsilon chain family. As to quaternary structure, F-type ATPases have 2 components, CF(1) - the catalytic core - and CF(0) - the membrane proton channel. CF(1) has five subunits: alpha(3), beta(3), gamma(1), delta(1), epsilon(1). CF(0) has three main subunits: a, b and c.

It is found in the cell membrane. In terms of biological role, produces ATP from ADP in the presence of a proton gradient across the membrane. In Staphylococcus haemolyticus (strain JCSC1435), this protein is ATP synthase epsilon chain.